Consider the following 294-residue polypeptide: Flavin-dependent thymidylate synthase (294 aa).

Residues 27–250 (GFIRVIDYMG…PFTYEAFEEY (224 aa)) enclose the ThyX domain. Residues Thr-73, 96 to 98 (RHR), and Glu-104 contribute to the FAD site. DUMP contacts are provided by residues 93 to 96 (QWIR), 104 to 108 (EYSAR), and Arg-189. The ThyX motif signature appears at 96–106 (RHRTASVNEYS). Residues 205 to 207 (NLH) and His-211 contribute to the FAD site. A dUMP-binding site is contributed by Arg-216. Arg-216 functions as the Involved in ionization of N3 of dUMP, leading to its activation in the catalytic mechanism.

Belongs to the thymidylate synthase ThyX family. In terms of assembly, homotetramer. The cofactor is FAD.

It catalyses the reaction dUMP + (6R)-5,10-methylene-5,6,7,8-tetrahydrofolate + NADPH + H(+) = dTMP + (6S)-5,6,7,8-tetrahydrofolate + NADP(+). It participates in pyrimidine metabolism; dTTP biosynthesis. Functionally, catalyzes the reductive methylation of 2'-deoxyuridine-5'-monophosphate (dUMP) to 2'-deoxythymidine-5'-monophosphate (dTMP) while utilizing 5,10-methylenetetrahydrofolate (mTHF) as the methyl donor, and NADPH and FADH(2) as the reductant. In Rickettsia bellii (strain RML369-C), this protein is Flavin-dependent thymidylate synthase.